The sequence spans 235 residues: Enolase-phosphatase E1 (235 aa).

The protein belongs to the HAD-like hydrolase superfamily. MasA/MtnC family. In terms of assembly, monomer. Requires Mg(2+) as cofactor.

The catalysed reaction is 5-methylsulfanyl-2,3-dioxopentyl phosphate + H2O = 1,2-dihydroxy-5-(methylsulfanyl)pent-1-en-3-one + phosphate. Its pathway is amino-acid biosynthesis; L-methionine biosynthesis via salvage pathway; L-methionine from S-methyl-5-thio-alpha-D-ribose 1-phosphate: step 3/6. It functions in the pathway amino-acid biosynthesis; L-methionine biosynthesis via salvage pathway; L-methionine from S-methyl-5-thio-alpha-D-ribose 1-phosphate: step 4/6. In terms of biological role, bifunctional enzyme that catalyzes the enolization of 2,3-diketo-5-methylthiopentyl-1-phosphate (DK-MTP-1-P) into the intermediate 2-hydroxy-3-keto-5-methylthiopentenyl-1-phosphate (HK-MTPenyl-1-P), which is then dephosphorylated to form the acireductone 1,2-dihydroxy-3-keto-5-methylthiopentene (DHK-MTPene). The sequence is that of Enolase-phosphatase E1 from Gluconacetobacter diazotrophicus (strain ATCC 49037 / DSM 5601 / CCUG 37298 / CIP 103539 / LMG 7603 / PAl5).